Here is a 436-residue protein sequence, read N- to C-terminus: GTPase Der (436 aa).

2 consecutive EngA-type G domains span residues 4–167 and 176–351; these read PVVA…PKEE and VKFS…DNHS. Residues 10 to 17, 57 to 61, 119 to 122, 182 to 189, 229 to 233, and 294 to 297 contribute to the GTP site; these read GRPNVGKS, DTGGI, NKVD, DTAGM, and NKWD. The 85-residue stretch at 352 to 436 folds into the KH-like domain; sequence LRVQSSMLND…PIRVIARKRK (85 aa).

The protein belongs to the TRAFAC class TrmE-Era-EngA-EngB-Septin-like GTPase superfamily. EngA (Der) GTPase family. As to quaternary structure, associates with the 50S ribosomal subunit.

In terms of biological role, GTPase that plays an essential role in the late steps of ribosome biogenesis. The chain is GTPase Der from Listeria welshimeri serovar 6b (strain ATCC 35897 / DSM 20650 / CCUG 15529 / CIP 8149 / NCTC 11857 / SLCC 5334 / V8).